A 213-amino-acid polypeptide reads, in one-letter code: EEF1A lysine methyltransferase 1 (213 aa).

Belongs to the class I-like SAM-binding methyltransferase superfamily. EFM5 family.

It is found in the cytoplasm. The catalysed reaction is L-lysyl-[protein] + 3 S-adenosyl-L-methionine = N(6),N(6),N(6)-trimethyl-L-lysyl-[protein] + 3 S-adenosyl-L-homocysteine + 3 H(+). Protein-lysine methyltransferase that selectively catalyzes the trimethylation of EEF1A at 'Lys-79'. This Gallus gallus (Chicken) protein is EEF1A lysine methyltransferase 1.